A 402-amino-acid polypeptide reads, in one-letter code: Acetate kinase (402 aa).

Mg(2+) is bound at residue N10. K17 provides a ligand contact to ATP. A substrate-binding site is contributed by R89. Catalysis depends on D148, which acts as the Proton donor/acceptor. ATP contacts are provided by residues 208–212, 283–285, and 334–338; these read HLGNG, DCR, and GIGEN. A Mg(2+)-binding site is contributed by E389.

It belongs to the acetokinase family. Homodimer. The cofactor is Mg(2+). Mn(2+) is required as a cofactor.

Its subcellular location is the cytoplasm. It carries out the reaction acetate + ATP = acetyl phosphate + ADP. The protein operates within metabolic intermediate biosynthesis; acetyl-CoA biosynthesis; acetyl-CoA from acetate: step 1/2. Catalyzes the formation of acetyl phosphate from acetate and ATP. Can also catalyze the reverse reaction. This Actinobacillus pleuropneumoniae serotype 5b (strain L20) protein is Acetate kinase.